Reading from the N-terminus, the 383-residue chain is Glycoprotein gp2 (383 aa).

The signal sequence occupies residues 1–25 (MGFIYARKLLLCMAVSIYAIGSTTT). Over residues 24 to 75 (TTTETTTSSSSTSGSGQSTSSGTTNSSSSPTTSPPTTSSSPPTSTHTSSPST) the composition is skewed to low complexity. The interval 24-136 (TTTETTTSSS…RNNSIEIVPQ (113 aa)) is disordered. N-linked (GlcNAc...) asparagine; by host glycosylation is present at asparagine 48. A compositionally biased stretch (basic residues) spans 81 to 91 (HAGHHRGRAGG). Residue asparagine 128 is glycosylated (N-linked (GlcNAc...) asparagine; by host). A helical membrane pass occupies residues 354-371 (LVAATTLTVTILCLLCCL).

The protein localises to the virion membrane. In terms of biological role, the glycoprotein gp2 from the avirulent strain Kentucky A (KyA) is probably non functional since this strain harbors an in-frame deletion of 1,242 nucleotides in gene 71. The sequence is that of Glycoprotein gp2 (US4) from Equus caballus (Horse).